The primary structure comprises 245 residues: Phosphoribosyl isomerase A (245 aa).

Asp11 acts as the Proton acceptor in catalysis. Residue Asp130 is the Proton donor of the active site.

Belongs to the HisA/HisF family.

It localises to the cytoplasm. The catalysed reaction is 1-(5-phospho-beta-D-ribosyl)-5-[(5-phospho-beta-D-ribosylamino)methylideneamino]imidazole-4-carboxamide = 5-[(5-phospho-1-deoxy-D-ribulos-1-ylimino)methylamino]-1-(5-phospho-beta-D-ribosyl)imidazole-4-carboxamide. The enzyme catalyses N-(5-phospho-beta-D-ribosyl)anthranilate = 1-(2-carboxyphenylamino)-1-deoxy-D-ribulose 5-phosphate. The protein operates within amino-acid biosynthesis; L-histidine biosynthesis; L-histidine from 5-phospho-alpha-D-ribose 1-diphosphate: step 4/9. It participates in amino-acid biosynthesis; L-tryptophan biosynthesis; L-tryptophan from chorismate: step 3/5. In terms of biological role, involved in both the histidine and tryptophan biosynthetic pathways. This Mycobacterium bovis (strain ATCC BAA-935 / AF2122/97) protein is Phosphoribosyl isomerase A (priA).